Here is a 215-residue protein sequence, read N- to C-terminus: Cytochrome b6 (215 aa).

Residues isoleucine 32 to phenylalanine 52 traverse the membrane as a helical segment. Cysteine 35 lines the heme c pocket. Residues histidine 86 and histidine 100 each contribute to the heme b site. 3 consecutive transmembrane segments (helical) span residues alanine 90–phenylalanine 110, leucine 116–tyrosine 136, and alanine 186–isoleucine 206. Heme b-binding residues include histidine 187 and histidine 202.

Belongs to the cytochrome b family. PetB subfamily. The 4 large subunits of the cytochrome b6-f complex are cytochrome b6, subunit IV (17 kDa polypeptide, PetD), cytochrome f and the Rieske protein, while the 4 small subunits are PetG, PetL, PetM and PetN. The complex functions as a dimer. Requires heme b as cofactor. The cofactor is heme c.

The protein resides in the plastid. It localises to the chloroplast thylakoid membrane. Functionally, component of the cytochrome b6-f complex, which mediates electron transfer between photosystem II (PSII) and photosystem I (PSI), cyclic electron flow around PSI, and state transitions. The polypeptide is Cytochrome b6 (Emiliania huxleyi (Coccolithophore)).